Consider the following 1124-residue polypeptide: Phytochrome type A (1124 aa).

Residues 1 to 19 (MSTTRPSQSSNNSGRSRNS) show a composition bias toward low complexity. A disordered region spans residues 1 to 21 (MSTTRPSQSSNNSGRSRNSAR). Residues 218 to 401 (SMERLCDTMV…VFAIHVNKEI (184 aa)) form the GAF domain. Residue cysteine 323 coordinates phytochromobilin. PAS domains are found at residues 617-687 (VTSE…LQGE) and 750-821 (DYKA…VNFG). In terms of domain architecture, Histidine kinase spans 901 to 1120 (YMKRQIRNPL…ILSVELAAAH (220 aa)).

This sequence belongs to the phytochrome family. As to quaternary structure, homodimer. Contains one covalently linked phytochromobilin chromophore.

Regulatory photoreceptor which exists in two forms that are reversibly interconvertible by light: the Pr form that absorbs maximally in the red region of the spectrum and the Pfr form that absorbs maximally in the far-red region. Photoconversion of Pr to Pfr induces an array of morphogenic responses, whereas reconversion of Pfr to Pr cancels the induction of those responses. Pfr controls the expression of a number of nuclear genes including those encoding the small subunit of ribulose-bisphosphate carboxylase, chlorophyll A/B binding protein, protochlorophyllide reductase, rRNA, etc. It also controls the expression of its own gene(s) in a negative feedback fashion. The sequence is that of Phytochrome type A (PHYA) from Lathyrus sativus (White vetchling).